Here is a 540-residue protein sequence, read N- to C-terminus: Synaptotagmin-3 (540 aa).

Residues 9–29 (GIIGFVIGIPIGLILGFFVLI) form a helical membrane-spanning segment. An SMP-LTD domain is found at 67-249 (DYERVDWFNK…WPQVLEIPIL (183 aa)). The phospholipid binding stretch occupies residues 227 to 509 (QETIKRQVSS…ELGHVDINLD (283 aa)). 2 C2 domains span residues 240-363 (WPQV…EFNL) and 401-521 (RKES…NQKY). 5 residues coordinate Ca(2+): Asp277, Asp283, Asp333, Asp335, and Asp341.

This sequence belongs to the synaptotagmin family. Requires Ca(2+) as cofactor.

It localises to the membrane. May be involved in membrane trafficking. The sequence is that of Synaptotagmin-3 (SYT3) from Arabidopsis thaliana (Mouse-ear cress).